Reading from the N-terminus, the 340-residue chain is Selenide, water dikinase (340 aa).

Cys13 is a catalytic residue. ATP-binding positions include Lys16 and 43-45 (ASD). Residue Asp46 coordinates Mg(2+). Residues Asp63, Asp86, and 133–135 (GHS) contribute to the ATP site. Asp86 is a binding site for Mg(2+). Asp221 provides a ligand contact to Mg(2+).

Belongs to the selenophosphate synthase 1 family. Class I subfamily. As to quaternary structure, homodimer. It depends on Mg(2+) as a cofactor.

The enzyme catalyses hydrogenselenide + ATP + H2O = selenophosphate + AMP + phosphate + 2 H(+). In terms of biological role, synthesizes selenophosphate from selenide and ATP. The sequence is that of Selenide, water dikinase from Desulfitobacterium hafniense (strain Y51).